A 194-amino-acid polypeptide reads, in one-letter code: Fe/S biogenesis protein NfuA (194 aa).

[4Fe-4S] cluster-binding residues include Cys151 and Cys154.

It belongs to the NfuA family. In terms of assembly, homodimer. [4Fe-4S] cluster serves as cofactor.

Functionally, involved in iron-sulfur cluster biogenesis. Binds a 4Fe-4S cluster, can transfer this cluster to apoproteins, and thereby intervenes in the maturation of Fe/S proteins. Could also act as a scaffold/chaperone for damaged Fe/S proteins. The sequence is that of Fe/S biogenesis protein NfuA from Photobacterium profundum (strain SS9).